The primary structure comprises 128 residues: Small ribosomal subunit protein uS9 (128 aa).

This sequence belongs to the universal ribosomal protein uS9 family.

The sequence is that of Small ribosomal subunit protein uS9 from Cytophaga hutchinsonii (strain ATCC 33406 / DSM 1761 / CIP 103989 / NBRC 15051 / NCIMB 9469 / D465).